Here is a 240-residue protein sequence, read N- to C-terminus: 6-phosphogluconolactonase (240 aa).

This sequence belongs to the glucosamine/galactosamine-6-phosphate isomerase family. 6-phosphogluconolactonase subfamily.

The catalysed reaction is 6-phospho-D-glucono-1,5-lactone + H2O = 6-phospho-D-gluconate + H(+). The protein operates within carbohydrate degradation; pentose phosphate pathway; D-ribulose 5-phosphate from D-glucose 6-phosphate (oxidative stage): step 2/3. Its function is as follows. Hydrolysis of 6-phosphogluconolactone to 6-phosphogluconate. The chain is 6-phosphogluconolactonase (pgl) from Nostoc sp. (strain PCC 7120 / SAG 25.82 / UTEX 2576).